Consider the following 242-residue polypeptide: Segregation and condensation protein A (242 aa).

It belongs to the ScpA family. Component of a cohesin-like complex composed of ScpA, ScpB and the Smc homodimer, in which ScpA and ScpB bind to the head domain of Smc. The presence of the three proteins is required for the association of the complex with DNA.

The protein resides in the cytoplasm. Its function is as follows. Participates in chromosomal partition during cell division. May act via the formation of a condensin-like complex containing Smc and ScpB that pull DNA away from mid-cell into both cell halves. This chain is Segregation and condensation protein A, found in Streptococcus mitis.